The following is a 461-amino-acid chain: ADP-specific phosphofructokinase (461 aa).

An ADPK domain is found at 1 to 457 (MVRELLEKAR…FASYLAMLKE (457 aa)). The Mg(2+) site is built by Glu268, Glu298, and Asp441. Asp441 functions as the Proton acceptor in the catalytic mechanism.

The protein belongs to the carbohydrate kinase PfkC family. Mg(2+) is required as a cofactor.

It localises to the cytoplasm. It carries out the reaction beta-D-fructose 6-phosphate + ADP = beta-D-fructose 1,6-bisphosphate + AMP + H(+). It participates in carbohydrate degradation; glycolysis. In terms of biological role, catalyzes the phosphorylation of fructose 6-phosphate to fructose 1,6-bisphosphate using ADP as the phosphate donor. The sequence is that of ADP-specific phosphofructokinase from Thermococcus zilligii.